The primary structure comprises 481 residues: Guanine nucleotide exchange factor C9orf72 homolog (481 aa).

Residues 23–194 (SPLLAATFAY…ELLASMRSHS (172 aa)) enclose the uDENN C9ORF72-type domain. Residues 200–343 (DIADTVLNDD…SELTAFWRAT (144 aa)) form the cDENN C9ORF72-type domain. Residues 370-464 (VLHRDTLVKA…IKPGLHSFIF (95 aa)) form the dDENN C9ORF72-type domain. Positions 461-481 (SFIFGRPFYTSVQERDVLMTF) are required for the homodimerization of the C9orf72-SMCR8 complex.

As to quaternary structure, component of the C9orf72-SMCR8 complex, at least composed of C9orf72, SMCR8 and WDR41. The complex is formed of two protomers, each individually consisting of one molecule each of C9orf72, SMCR8 and WDR41. The protomers homodimerize via an interaction between C9orf72 (via C-terminus) and SMCR8 (via N-terminus). Within each protomer SMCR8 (via DENN domain) acts as a bridging protein between WDR41 (via C-terminus and N-terminus) and C9orf72 (via C-terminus). The C9orf72-SMCR8 complex associates with the ULK1/ATG1 kinase complex. Interacts with ULK1/ATG1 kinase complex members ULK1, ATG13 and RB1CC1. Interacts with SMCR8; the interaction is direct. Interacts with HNRNPA1, HNRNPA2B1 and UBQLN2. Interacts with small Rab GTPase RAB1A; the interaction mediates recruitment of RAB1A to the ULK1/ATG1 kinase complex. Also interacts with small Rab GTPase RAB7A. Interacts with cofilin. Interacts with GTP-binding proteins ARF1 and ARF6. Interacts with the DLG4/PSD-95. Interacts with CARM1 (via PH domain-like fold). Interacts with RAB39A and RAB39B (in GDP-bound forms); functions as GEF for RAB39A and RAB39B.

The protein localises to the nucleus. Its subcellular location is the cytoplasm. It is found in the P-body. It localises to the stress granule. The protein resides in the endosome. The protein localises to the lysosome. Its subcellular location is the cytoplasmic vesicle. It is found in the autophagosome. It localises to the autolysosome. The protein resides in the secreted. The protein localises to the cell projection. Its subcellular location is the axon. It is found in the growth cone. It localises to the perikaryon. Its function is as follows. Acts as a guanine-nucleotide releasing factor (GEF) for Rab GTPases by promoting the conversion of inactive RAB-GDP to the active form RAB-GTP. Acts as a GEF for RAB39A which enables HOPS-mediated autophagosome-lysosome membrane tethering and fusion in mammalian autophagy. Component of the C9orf72-SMCR8 complex where both subunits display GEF activity and that regulates autophagy. As part of the C9orf72-SMCR8-WDR41 (CSW) complex, functions as GEF for RAB8A and RAB39B, thereby promoting autophagosome maturation. As part of the C9orf72-SMCR8 complex, also functions as GTPase activating protein (GAP) for RAB8A and RAB11A in vitro. The C9orf72-SMCR8 complex also acts as a regulator of autophagy initiation by interacting with the ULK1/ATG1 kinase complex and modulating its protein kinase activity. Promotes initiation of autophagy by regulating the RAB1A-dependent trafficking of the ULK1/ATG1 kinase complex to the phagophore which leads to autophagosome formation. Acts as a regulator of mTORC1 signaling by promoting phosphorylation of mTORC1 substrates. Plays a role in endosomal trafficking. May be involved in regulating the maturation of phagosomes to lysosomes. Promotes the lysosomal localization and lysosome-mediated degradation of CARM1 which leads to inhibition of starvation-induced lipid metabolism. Regulates actin dynamics in motor neurons by inhibiting the GTP-binding activity of ARF6, leading to ARF6 inactivation. This reduces the activity of the LIMK1 and LIMK2 kinases which are responsible for phosphorylation and inactivation of cofilin, leading to CFL1/cofilin activation. Positively regulates axon extension and axon growth cone size in spinal motor neurons. Required for SMCR8 protein expression and localization at pre- and post-synaptic compartments in the forebrain, also regulates protein abundance of RAB3A and GRIA1/GLUR1 in post-synaptic compartments in the forebrain and hippocampus. Plays a role within the hematopoietic system in restricting inflammation and the development of autoimmunity. This chain is Guanine nucleotide exchange factor C9orf72 homolog, found in Rattus norvegicus (Rat).